Consider the following 204-residue polypeptide: Urease accessory protein UreG (204 aa).

Glycine 12–threonine 19 contacts GTP.

This sequence belongs to the SIMIBI class G3E GTPase family. UreG subfamily. As to quaternary structure, homodimer. UreD, UreF and UreG form a complex that acts as a GTP-hydrolysis-dependent molecular chaperone, activating the urease apoprotein by helping to assemble the nickel containing metallocenter of UreC. The UreE protein probably delivers the nickel.

The protein localises to the cytoplasm. Its function is as follows. Facilitates the functional incorporation of the urease nickel metallocenter. This process requires GTP hydrolysis, probably effectuated by UreG. The chain is Urease accessory protein UreG from Pseudomonas fluorescens (strain Pf0-1).